Here is a 206-residue protein sequence, read N- to C-terminus: Isochorismatase family protein 1B (206 aa).

The protein belongs to the isochorismatase family.

The protein is Isochorismatase family protein 1B of Dictyostelium discoideum (Social amoeba).